Reading from the N-terminus, the 401-residue chain is Probable acid ceramidase (401 aa).

The signal sequence occupies residues 1–22 (MKPVAISLSLLLLVTLLPGSEQ). Asparagine 101, asparagine 303, and asparagine 371 each carry an N-linked (GlcNAc...) asparagine glycan.

This sequence belongs to the acid ceramidase family.

The enzyme catalyses an N-acyl-sphingoid base + H2O = a sphingoid base + a fatty acid. It catalyses the reaction an N-acylsphing-4-enine + H2O = sphing-4-enine + a fatty acid. The catalysed reaction is an N-acyl-15-methylhexadecasphing-4-enine + H2O = 15-methylhexadecasphing-4-enine + a fatty acid. Functionally, catalyzes the hydrolysis of ceramides into sphingoid base and free fatty acid. C.elegans contain specific sphingoid bases, which are unique or different in structure compared to the sphingoid bases found in other animals. Two examples of these distinctive compounds are: 15-methylhexadecasphinganine and 15-methylhexadecasphing-4-enine. This Caenorhabditis elegans protein is Probable acid ceramidase.